A 125-amino-acid polypeptide reads, in one-letter code: uncharacterized protein (125 aa).

Residues 14–112 (CPVEFTLDVI…WGESNRDVLE (99 aa)) enclose the HTH hxlR-type domain.

This is an uncharacterized protein from Bacillus subtilis (strain 168).